The sequence spans 1031 residues: Beta-galactosidase (1031 aa).

Residues Asn98 and Asp197 each coordinate substrate. Na(+) is bound at residue Asp197. The Mg(2+) site is built by Glu412, His414, and Glu457. Substrate-binding positions include Glu457 and 533 to 536; that span reads EYAH. Glu457 (proton donor) is an active-site residue. Glu533 serves as the catalytic Nucleophile. Asn593 lines the Mg(2+) pocket. Phe597 and Asp600 together coordinate Na(+). Substrate-binding residues include Asp600 and Trp1005.

Belongs to the glycosyl hydrolase 2 family. Homotetramer. Mg(2+) is required as a cofactor. Na(+) serves as cofactor.

It catalyses the reaction Hydrolysis of terminal non-reducing beta-D-galactose residues in beta-D-galactosides.. In Oenococcus oeni (strain ATCC BAA-331 / PSU-1), this protein is Beta-galactosidase.